Here is a 651-residue protein sequence, read N- to C-terminus: Probable ATP-dependent helicase MJ0942 (651 aa).

One can recognise a Helicase ATP-binding domain in the interval 6 to 255; that stretch reads YIKEKFPYPK…EIIEKYLTSR (250 aa). 41-48 contributes to the ATP binding site; the sequence is APTGVGKT. 3 residues coordinate [4Fe-4S] cluster: Cys102, Cys149, and Cys154. Residues 195–198 carry the DEAH box motif; it reads DEAH. The region spanning 449–638 is the Helicase C-terminal domain; that stretch reads NLLKILEAIN…NYEVMSLDMA (190 aa).

Belongs to the helicase family. DinG subfamily. [4Fe-4S] cluster is required as a cofactor.

It carries out the reaction Couples ATP hydrolysis with the unwinding of duplex DNA at the replication fork by translocating in the 5'-3' direction. This creates two antiparallel DNA single strands (ssDNA). The leading ssDNA polymer is the template for DNA polymerase III holoenzyme which synthesizes a continuous strand.. The enzyme catalyses ATP + H2O = ADP + phosphate + H(+). Might be a 5'-3' DNA helicase. In Methanocaldococcus jannaschii (strain ATCC 43067 / DSM 2661 / JAL-1 / JCM 10045 / NBRC 100440) (Methanococcus jannaschii), this protein is Probable ATP-dependent helicase MJ0942.